A 364-amino-acid polypeptide reads, in one-letter code: UDP-N-acetylglucosamine--N-acetylmuramyl-(pentapeptide) pyrophosphoryl-undecaprenol N-acetylglucosamine transferase (364 aa).

UDP-N-acetyl-alpha-D-glucosamine is bound by residues 13-15 (TGG), Asn125, Arg165, Ser192, and Gln293.

This sequence belongs to the glycosyltransferase 28 family. MurG subfamily.

The protein resides in the cell inner membrane. The enzyme catalyses di-trans,octa-cis-undecaprenyl diphospho-N-acetyl-alpha-D-muramoyl-L-alanyl-D-glutamyl-meso-2,6-diaminopimeloyl-D-alanyl-D-alanine + UDP-N-acetyl-alpha-D-glucosamine = di-trans,octa-cis-undecaprenyl diphospho-[N-acetyl-alpha-D-glucosaminyl-(1-&gt;4)]-N-acetyl-alpha-D-muramoyl-L-alanyl-D-glutamyl-meso-2,6-diaminopimeloyl-D-alanyl-D-alanine + UDP + H(+). It functions in the pathway cell wall biogenesis; peptidoglycan biosynthesis. Its function is as follows. Cell wall formation. Catalyzes the transfer of a GlcNAc subunit on undecaprenyl-pyrophosphoryl-MurNAc-pentapeptide (lipid intermediate I) to form undecaprenyl-pyrophosphoryl-MurNAc-(pentapeptide)GlcNAc (lipid intermediate II). This is UDP-N-acetylglucosamine--N-acetylmuramyl-(pentapeptide) pyrophosphoryl-undecaprenol N-acetylglucosamine transferase from Cereibacter sphaeroides (strain ATCC 17029 / ATH 2.4.9) (Rhodobacter sphaeroides).